The sequence spans 247 residues: GTP cyclohydrolase 1 type 2 homolog (247 aa).

A divalent metal cation-binding residues include H63, H64, D101, H215, and E219.

The protein belongs to the GTP cyclohydrolase I type 2/NIF3 family. In terms of assembly, homohexamer.

In Yersinia pestis, this protein is GTP cyclohydrolase 1 type 2 homolog.